The primary structure comprises 324 residues: Dioxygenase tasH (324 aa).

Residues 1-25 (MRSMSLWMLIGPVTGIATWASLRYA) form the signal peptide. 3 residues coordinate Zn(2+): histidine 50, histidine 96, and histidine 284.

The protein belongs to the DODA-type extradiol aromatic ring-opening dioxygenase family. In terms of assembly, monomer. Requires Zn(2+) as cofactor.

Its function is as follows. Dioxygenase; part of the gene cluster that mediates the biosynthesis of the tetramic acids Sch210971 and Sch210972, potential anti-HIV fungal natural product that contain a decalin core. The PKS module of tasS together with the enoylreductase tasC catalyze the formation of the polyketide unit which is then conjugated to 4-hydroxyl-4-methyl glutamate (HMG) by the condensation domain of the tasS NRPS module. One unique structural feature of Sch210971 and Sch210972 is the tetramic acid motif proposed to be derived from the non-proteinogenic amino acid HMG, by a Dieckmann-type condensation catalyzed by the reductase domain of tasS. The aldolase tasA catalyzes the aldol condensation of 2 molecules of pyruvic acid to yield the intermediate 4-hydroxyl-4-methyl-2-oxoglutarate (HMOG), which can then be stereoselectively transaminated, may be by tasG, to form HMG. The Diels-Alderase tas3 then uses the Dieckmann product of tasS as substrate and catalyzes the Diels-Alder cycloaddition to form the decalin ring of Sch210971 and Sch210972. This Hapsidospora irregularis protein is Dioxygenase tasH.